A 251-amino-acid polypeptide reads, in one-letter code: Haloacid dehalogenase-like hydrolase domain-containing protein 3 (251 aa).

The residue at position 15 (Lys-15) is an N6-acetyllysine; alternate. Lys-15 carries the post-translational modification N6-succinyllysine; alternate.

Belongs to the HAD-like hydrolase superfamily.

The sequence is that of Haloacid dehalogenase-like hydrolase domain-containing protein 3 (HDHD3) from Homo sapiens (Human).